The chain runs to 425 residues: Enolase (425 aa).

Gln-162 contributes to the (2R)-2-phosphoglycerate binding site. The active-site Proton donor is the Glu-204. The Mg(2+) site is built by Asp-241, Glu-282, and Asp-309. Lys-334, Arg-363, Ser-364, and Lys-385 together coordinate (2R)-2-phosphoglycerate. Lys-334 functions as the Proton acceptor in the catalytic mechanism.

Belongs to the enolase family. Requires Mg(2+) as cofactor.

The protein resides in the cytoplasm. Its subcellular location is the secreted. It is found in the cell surface. It catalyses the reaction (2R)-2-phosphoglycerate = phosphoenolpyruvate + H2O. It functions in the pathway carbohydrate degradation; glycolysis; pyruvate from D-glyceraldehyde 3-phosphate: step 4/5. In terms of biological role, catalyzes the reversible conversion of 2-phosphoglycerate (2-PG) into phosphoenolpyruvate (PEP). It is essential for the degradation of carbohydrates via glycolysis. The sequence is that of Enolase from Corynebacterium jeikeium (strain K411).